A 2615-amino-acid polypeptide reads, in one-letter code: Probable serine/threonine-protein kinase roco7 (2615 aa).

Low complexity predominate over residues 1–13 (MDGYSSLSSSGNS). Disordered regions lie at residues 1 to 35 (MDGYSSLSSSGNSIAPPRPTNNSVGGGSNSNNYNQ), 275 to 297 (STPTIITSSSSTTTPTNNNNSNN), 533 to 623 (QNIN…GGLN), and 946 to 998 (SSSS…ISEQ). Composition is skewed to low complexity over residues 533-560 (QNINQNNNNNNNQNCNSNTSSPIISSRS), 567-614 (NSST…NNNN), and 946-996 (SSSS…SNIS). One can recognise a COR domain in the interval 1441-1631 (SVKEAYARNK…LCIWQNGMVL (191 aa)). Residues 1775 to 2042 (LKFGPQLGSG…ERLSTMQKTF (268 aa)) enclose the Protein kinase domain. ATP-binding positions include 1781–1789 (LGSGSYANV) and Lys-1802. The active-site Proton acceptor is Asp-1899. Disordered regions lie at residues 2061–2158 (QINQ…SHSG) and 2176–2209 (GIGSGGNQHQQNGSSTPHSNSQSNSGSSSVYESG). 2 stretches are compositionally biased toward low complexity: residues 2073–2158 (SQAA…SHSG) and 2182–2209 (NQHQQNGSSTPHSNSQSNSGSSSVYESG). 2 WD repeats span residues 2491-2527 (GIIKKRLDGLASRVLSLLILDTYIIGACYDSTILVWD) and 2533-2574 (RMVQ…TTYS).

Belongs to the protein kinase superfamily. TKL Ser/Thr protein kinase family. ROCO subfamily.

It carries out the reaction L-seryl-[protein] + ATP = O-phospho-L-seryl-[protein] + ADP + H(+). The catalysed reaction is L-threonyl-[protein] + ATP = O-phospho-L-threonyl-[protein] + ADP + H(+). The sequence is that of Probable serine/threonine-protein kinase roco7 (roco7) from Dictyostelium discoideum (Social amoeba).